The following is a 464-amino-acid chain: tRNA modification GTPase MnmE (464 aa).

(6S)-5-formyl-5,6,7,8-tetrahydrofolate contacts are provided by arginine 27, glutamate 90, and lysine 129. The region spanning 222–384 is the TrmE-type G domain; sequence GVTLVLAGSV…LYDKIKTLIS (163 aa). GTP is bound by residues 232 to 237, 251 to 257, and 276 to 279; these read NAGKSS, SSYPGTT, and DTAG. Mg(2+) is bound by residues serine 236 and threonine 257. Residue lysine 464 coordinates (6S)-5-formyl-5,6,7,8-tetrahydrofolate.

The protein belongs to the TRAFAC class TrmE-Era-EngA-EngB-Septin-like GTPase superfamily. TrmE GTPase family. In terms of assembly, homodimer. Heterotetramer of two MnmE and two MnmG subunits. K(+) serves as cofactor.

Its subcellular location is the cytoplasm. Exhibits a very high intrinsic GTPase hydrolysis rate. Involved in the addition of a carboxymethylaminomethyl (cmnm) group at the wobble position (U34) of certain tRNAs, forming tRNA-cmnm(5)s(2)U34. The polypeptide is tRNA modification GTPase MnmE (Borrelia garinii subsp. bavariensis (strain ATCC BAA-2496 / DSM 23469 / PBi) (Borreliella bavariensis)).